The primary structure comprises 422 residues: Proton-gated ion channel subunit pbo-6 (422 aa).

A signal peptide spans 1–20 (MQCSFLTIFIFITTVTVGVA). Topologically, residues 21 to 233 (EFSEQYQGSS…IKVARKPFYY (213 aa)) are extracellular. A disulfide bridge links C151 with C165. The next 3 helical transmembrane spans lie at 234–254 (LISL…GLFA), 268–288 (LGVT…EKVP), and 294–314 (VPLL…ATIL). Topologically, residues 315-378 (TSTVMRVHAK…GEVSRRMDYL (64 aa)) are cytoplasmic. Residues 379-399 (LASVFIIIISTPTLYLFYMCF) form a helical membrane-spanning segment.

The protein belongs to the ligand-gated ion channel (TC 1.A.9) family. Acetylcholine receptor (TC 1.A.9.1) subfamily. As to quaternary structure, the functional channel is a hetero-oligomer of pbo-5 and pbo-6. Expressed in the posterior body muscles.

It is found in the membrane. Forms a proton-gated ion channel with pbo-5 that is activated by acidification of the posterior coelomic space, leading to posterior body wall muscle contraction (pBoc) during the defecation cycle. Not necessary for stimulation of posterior body contraction (pBoc). Does not bind neurotransmitters such as acetylcholine, gamma-aminobutyric acid, glycine, serotonin, glutamate or choline. The protein is Proton-gated ion channel subunit pbo-6 of Caenorhabditis elegans.